A 94-amino-acid polypeptide reads, in one-letter code: MRAAIAVLFIALVGLATYHLVMSQANPELRTVDIEGKKLILRGFENPAVKVKGCGEEALLHGSIVEIPLNCSKVKVEVYSEGRLVFSSSLSLNP.

The N-terminal stretch at 1–25 is a signal peptide; that stretch reads MRAAIAVLFIALVGLATYHLVMSQA.

This is an uncharacterized protein from Archaeoglobus fulgidus (strain ATCC 49558 / DSM 4304 / JCM 9628 / NBRC 100126 / VC-16).